Here is a 320-residue protein sequence, read N- to C-terminus: Lipoyl synthase (320 aa).

The segment covering 1 to 29 (MIGKLVRDLKIPDQRHPEKAHRPDNDQPR) has biased composition (basic and acidic residues). The interval 1–32 (MIGKLVRDLKIPDQRHPEKAHRPDNDQPRKPS) is disordered. [4Fe-4S] cluster contacts are provided by Cys-60, Cys-65, Cys-71, Cys-86, Cys-90, Cys-93, and Ser-300. The Radical SAM core domain occupies 71 to 289 (CWGQGHATMM…EKAAYGKGFL (219 aa)).

Belongs to the radical SAM superfamily. Lipoyl synthase family. It depends on [4Fe-4S] cluster as a cofactor.

It is found in the cytoplasm. The catalysed reaction is [[Fe-S] cluster scaffold protein carrying a second [4Fe-4S](2+) cluster] + N(6)-octanoyl-L-lysyl-[protein] + 2 oxidized [2Fe-2S]-[ferredoxin] + 2 S-adenosyl-L-methionine + 4 H(+) = [[Fe-S] cluster scaffold protein] + N(6)-[(R)-dihydrolipoyl]-L-lysyl-[protein] + 4 Fe(3+) + 2 hydrogen sulfide + 2 5'-deoxyadenosine + 2 L-methionine + 2 reduced [2Fe-2S]-[ferredoxin]. Its pathway is protein modification; protein lipoylation via endogenous pathway; protein N(6)-(lipoyl)lysine from octanoyl-[acyl-carrier-protein]: step 2/2. In terms of biological role, catalyzes the radical-mediated insertion of two sulfur atoms into the C-6 and C-8 positions of the octanoyl moiety bound to the lipoyl domains of lipoate-dependent enzymes, thereby converting the octanoylated domains into lipoylated derivatives. The chain is Lipoyl synthase from Cereibacter sphaeroides (strain ATCC 17025 / ATH 2.4.3) (Rhodobacter sphaeroides).